The sequence spans 246 residues: 1-(5-phosphoribosyl)-5-[(5-phosphoribosylamino)methylideneamino] imidazole-4-carboxamide isomerase (246 aa).

Aspartate 10 functions as the Proton acceptor in the catalytic mechanism. The active-site Proton donor is aspartate 135.

The protein belongs to the HisA/HisF family.

The protein localises to the cytoplasm. The enzyme catalyses 1-(5-phospho-beta-D-ribosyl)-5-[(5-phospho-beta-D-ribosylamino)methylideneamino]imidazole-4-carboxamide = 5-[(5-phospho-1-deoxy-D-ribulos-1-ylimino)methylamino]-1-(5-phospho-beta-D-ribosyl)imidazole-4-carboxamide. Its pathway is amino-acid biosynthesis; L-histidine biosynthesis; L-histidine from 5-phospho-alpha-D-ribose 1-diphosphate: step 4/9. The polypeptide is 1-(5-phosphoribosyl)-5-[(5-phosphoribosylamino)methylideneamino] imidazole-4-carboxamide isomerase (Methanosarcina mazei (strain ATCC BAA-159 / DSM 3647 / Goe1 / Go1 / JCM 11833 / OCM 88) (Methanosarcina frisia)).